The chain runs to 214 residues: MAEEVPVSNVEEWKPRTKIGQLVKEGKITSIKELYARNMSIAEPEIIDVLLPNMKYEVIDIGMVQKQTDAGELSRYKVLVVMGNYDGYVSIGVGKSKQLRVAIQKAIRDAKMHVIPVRRGCGSWECTCGESHSLPFLVSGKSGSAEVVLRPAPKGTGLVAGGVLKTLLTYAGIKDVWSFSRGETRTTDNFIMAGYRALYNTYKFVTPVDWARRR.

One can recognise an S5 DRBM domain in the interval 54-117 (MKYEVIDIGM…RDAKMHVIPV (64 aa)).

Belongs to the universal ribosomal protein uS5 family. As to quaternary structure, part of the 30S ribosomal subunit. Contacts protein S4.

Functionally, with S4 and S12 plays an important role in translational accuracy. This Metallosphaera sedula (strain ATCC 51363 / DSM 5348 / JCM 9185 / NBRC 15509 / TH2) protein is Small ribosomal subunit protein uS5.